A 237-amino-acid chain; its full sequence is tRNA (guanine-N(1)-)-methyltransferase (237 aa).

Residues glycine 113 and 133–138 (VGDFIV) each bind S-adenosyl-L-methionine.

Belongs to the RNA methyltransferase TrmD family. As to quaternary structure, homodimer.

The protein localises to the cytoplasm. The enzyme catalyses guanosine(37) in tRNA + S-adenosyl-L-methionine = N(1)-methylguanosine(37) in tRNA + S-adenosyl-L-homocysteine + H(+). Its function is as follows. Specifically methylates guanosine-37 in various tRNAs. In Hydrogenovibrio crunogenus (strain DSM 25203 / XCL-2) (Thiomicrospira crunogena), this protein is tRNA (guanine-N(1)-)-methyltransferase.